The following is a 136-amino-acid chain: Probable disulfide formation protein (136 aa).

The chain crosses the membrane as a helical span at residues 7 to 26 (NNALYFAWLICSTGTVMSIY). A disulfide bridge connects residues Cys-36 and Cys-39. Transmembrane regions (helical) follow at residues 41-60 (YQRICLFPLSIILGIATYRE) and 67-84 (YALPLSITGMVIAVYQIC). Residues Cys-96 and Cys-101 are joined by a disulfide bond. The helical transmembrane segment at 109 to 133 (GFITVPMASALAFCAISCLLILSGS) threads the bilayer.

The protein belongs to the DsbB family. BdbC subfamily.

It localises to the cell inner membrane. Required for disulfide bond formation in some proteins. The sequence is that of Probable disulfide formation protein from Chlamydia caviae (strain ATCC VR-813 / DSM 19441 / 03DC25 / GPIC) (Chlamydophila caviae).